Here is a 202-residue protein sequence, read N- to C-terminus: MELLKEQIREVARVEKGNVLKVDSFLNHQLDIPLLNEIGKELKKRFQGEKVDKILTAEVSGIAIAAIAAQYFNVPVVFAKKTQSKNLDQDTYEGEVYSYTKGQAYKIRVSKRYLHEKENILIIDDFLANGEALQGLREIVVQANANLVGAGIVIEKGFQGGGKRLRAENMRIESLAIIDEMNESTLVFRDDKADLKADPKAS.

The xanthine site is built by Leu-20 and Asn-27. 128 to 132 (ANGEA) serves as a coordination point for 5-phospho-alpha-D-ribose 1-diphosphate. Lys-156 is a binding site for xanthine.

The protein belongs to the purine/pyrimidine phosphoribosyltransferase family. Xpt subfamily. As to quaternary structure, homodimer.

The protein localises to the cytoplasm. The catalysed reaction is XMP + diphosphate = xanthine + 5-phospho-alpha-D-ribose 1-diphosphate. It functions in the pathway purine metabolism; XMP biosynthesis via salvage pathway; XMP from xanthine: step 1/1. In terms of biological role, converts the preformed base xanthine, a product of nucleic acid breakdown, to xanthosine 5'-monophosphate (XMP), so it can be reused for RNA or DNA synthesis. In Alkaliphilus metalliredigens (strain QYMF), this protein is Xanthine phosphoribosyltransferase.